Consider the following 301-residue polypeptide: LTTIIPILLAVAFLTLLERKVLGYMQLRKGPNIVGPYGLLQPIADAVKLFIKEPLQPLTSSLALFIIAPTLALTLALMMWIPLPMPHPLINMNLSILFMLALSSLAVYAILWSGWASNSKYALIGALRAVAQTISYEVTLAIIILSILLMNGSFTLSTLITTQEYTWLIMPSWPLAMMWFISTIAETNRAPFDLTEGESELVSGFNVEYAGGPFALFFLAEYANIIMMNALTIILFLGAYNNSTFPEMYTANFMLKALLFTTFFLWIRASYPRFRYDQLMHLLWKNFLPLTLVMCMWHVTL.

8 helical membrane passes run 4-24 (IIPILLAVAFLTLLERKVLGY), 62-82 (LALFIIAPTLALTLALMMWIP), 96-116 (ILFMLALSSLAVYAILWSGWA), 140-160 (LAIIILSILLMNGSFTLSTLI), 165-185 (YTWLIMPSWPLAMMWFISTIA), 216-236 (LFFLAEYANIIMMNALTIILF), 247-267 (EMYTANFMLKALLFTTFFLWI), and 279-299 (LMHLLWKNFLPLTLVMCMWHV).

The protein belongs to the complex I subunit 1 family.

It localises to the mitochondrion inner membrane. The catalysed reaction is a ubiquinone + NADH + 5 H(+)(in) = a ubiquinol + NAD(+) + 4 H(+)(out). Its function is as follows. Core subunit of the mitochondrial membrane respiratory chain NADH dehydrogenase (Complex I) that is believed to belong to the minimal assembly required for catalysis. Complex I functions in the transfer of electrons from NADH to the respiratory chain. The immediate electron acceptor for the enzyme is believed to be ubiquinone. This chain is NADH-ubiquinone oxidoreductase chain 1 (MT-ND1), found in Nyctalus noctula (Noctule bat).